The chain runs to 137 residues: uncharacterized protein (137 aa).

This is an uncharacterized protein from Homo sapiens (Human).